The chain runs to 333 residues: NADH-quinone oxidoreductase subunit H (333 aa).

A run of 8 helical transmembrane segments spans residues 17-37 (VIQAIVILLVVVLVAALMSFI), 91-111 (VAMATAVLSFIVIPVSPTLGV), 116-136 (IGLLFFMAMAGIAVYAVLFGG), 156-176 (ISYEVFLGISLMGVVAIAGSF), 188-208 (MWFIVPQFLGFMIFVVAGVAV), 244-264 (YVNIVLISALIVTLFFGGWLA), 272-292 (FIPPVFWFIVKTAFFVMMFVL), and 310-330 (WKVCLPLALVNLMVTGAVILM).

It belongs to the complex I subunit 1 family. As to quaternary structure, NDH-1 is composed of 14 different subunits. Subunits NuoA, H, J, K, L, M, N constitute the membrane sector of the complex.

It is found in the cell inner membrane. The catalysed reaction is a quinone + NADH + 5 H(+)(in) = a quinol + NAD(+) + 4 H(+)(out). In terms of biological role, NDH-1 shuttles electrons from NADH, via FMN and iron-sulfur (Fe-S) centers, to quinones in the respiratory chain. The immediate electron acceptor for the enzyme in this species is believed to be ubiquinone. Couples the redox reaction to proton translocation (for every two electrons transferred, four hydrogen ions are translocated across the cytoplasmic membrane), and thus conserves the redox energy in a proton gradient. This subunit may bind ubiquinone. This is NADH-quinone oxidoreductase subunit H from Acinetobacter baylyi (strain ATCC 33305 / BD413 / ADP1).